We begin with the raw amino-acid sequence, 215 residues long: Large ribosomal subunit protein uL3 (215 aa).

N5-methylglutamine is present on Q156.

It belongs to the universal ribosomal protein uL3 family. As to quaternary structure, part of the 50S ribosomal subunit. Forms a cluster with proteins L14 and L19. In terms of processing, methylated by PrmB.

In terms of biological role, one of the primary rRNA binding proteins, it binds directly near the 3'-end of the 23S rRNA, where it nucleates assembly of the 50S subunit. In Xylella fastidiosa (strain M23), this protein is Large ribosomal subunit protein uL3.